The chain runs to 393 residues: Riboflavin biosynthesis protein RibBA (393 aa).

The DHBP synthase stretch occupies residues 1–200 (MQFDNIDSAL…IDDLIEYRKK (200 aa)). D-ribulose 5-phosphate contacts are provided by residues 27–28 (RE), D32, 139–143 (RNGHT), and E163. E28 is a binding site for Mg(2+). A Mg(2+)-binding site is contributed by H142. The GTP cyclohydrolase II stretch occupies residues 201–393 (LEPEIEFKAK…TKKIKMGHLI (193 aa)). 249 to 253 (RLHSA) provides a ligand contact to GTP. Zn(2+) contacts are provided by C254, C265, and C267. GTP-binding positions include Q270, 291-293 (EGR), and T313. D325 functions as the Proton acceptor; for GTP cyclohydrolase activity in the catalytic mechanism. R327 (nucleophile; for GTP cyclohydrolase activity) is an active-site residue. 2 residues coordinate GTP: S348 and K353.

In the N-terminal section; belongs to the DHBP synthase family. This sequence in the C-terminal section; belongs to the GTP cyclohydrolase II family. Mg(2+) is required as a cofactor. Mn(2+) serves as cofactor. Requires Zn(2+) as cofactor.

It carries out the reaction D-ribulose 5-phosphate = (2S)-2-hydroxy-3-oxobutyl phosphate + formate + H(+). The catalysed reaction is GTP + 4 H2O = 2,5-diamino-6-hydroxy-4-(5-phosphoribosylamino)-pyrimidine + formate + 2 phosphate + 3 H(+). It functions in the pathway cofactor biosynthesis; riboflavin biosynthesis; 2-hydroxy-3-oxobutyl phosphate from D-ribulose 5-phosphate: step 1/1. It participates in cofactor biosynthesis; riboflavin biosynthesis; 5-amino-6-(D-ribitylamino)uracil from GTP: step 1/4. Catalyzes the conversion of D-ribulose 5-phosphate to formate and 3,4-dihydroxy-2-butanone 4-phosphate. Functionally, catalyzes the conversion of GTP to 2,5-diamino-6-ribosylamino-4(3H)-pyrimidinone 5'-phosphate (DARP), formate and pyrophosphate. This chain is Riboflavin biosynthesis protein RibBA, found in Staphylococcus aureus (strain MRSA252).